The primary structure comprises 93 residues: Pyrimidine/purine nucleoside phosphorylase (93 aa).

This sequence belongs to the nucleoside phosphorylase PpnP family.

The enzyme catalyses a purine D-ribonucleoside + phosphate = a purine nucleobase + alpha-D-ribose 1-phosphate. It carries out the reaction adenosine + phosphate = alpha-D-ribose 1-phosphate + adenine. The catalysed reaction is cytidine + phosphate = cytosine + alpha-D-ribose 1-phosphate. It catalyses the reaction guanosine + phosphate = alpha-D-ribose 1-phosphate + guanine. The enzyme catalyses inosine + phosphate = alpha-D-ribose 1-phosphate + hypoxanthine. It carries out the reaction thymidine + phosphate = 2-deoxy-alpha-D-ribose 1-phosphate + thymine. The catalysed reaction is uridine + phosphate = alpha-D-ribose 1-phosphate + uracil. It catalyses the reaction xanthosine + phosphate = alpha-D-ribose 1-phosphate + xanthine. Functionally, catalyzes the phosphorolysis of diverse nucleosides, yielding D-ribose 1-phosphate and the respective free bases. Can use uridine, adenosine, guanosine, cytidine, thymidine, inosine and xanthosine as substrates. Also catalyzes the reverse reactions. This Aliivibrio salmonicida (strain LFI1238) (Vibrio salmonicida (strain LFI1238)) protein is Pyrimidine/purine nucleoside phosphorylase.